The primary structure comprises 4662 residues: Protein PF3D7_1417600 (4662 aa).

2 consecutive transmembrane segments (helical) span residues 136–156 (INYV…YLYI) and 161–181 (YIYY…FHII). The LRR 1 repeat unit spans residues 466-489 (IKNIDSINKNHKRLIKISNYNITN). The interval 583–710 (YRNDGDVNNK…KMKPDNTLNE (128 aa)) is disordered. Residues 590–644 (NNKNGYNNNEHSNSSNERSNNNGDNNNNNHNNNNHNNNHHNNGSNNHNGNNNSNN) show a composition bias toward low complexity. Residues 650–666 (DDDKKGNDKKNEDKDDE) are compositionally biased toward basic and acidic residues. The segment covering 690-701 (KKRKEKSKNKNK) has biased composition (basic residues). The HSA domain occupies 783-856 (YKPTEPVNIF…ISNDIKMFWF (74 aa)). Residues 942–967 (GLMNKMSHQNGKNNNHNDYNNKCEDN) form a disordered region. One copy of the LRR 2 repeat lies at 1150 to 1172 (NVHINHIQYDDNNLYYNDDLYNY). Over residues 1505-1524 (NNNNNSNNNNSNSNNNSNSN) the composition is skewed to low complexity. Disordered regions lie at residues 1505–1540 (NNNN…NNSS) and 1705–1761 (KINS…NEKD). The span at 1710–1761 (NNDKSDDKNDDKNDKKNDGKNDKNDEKDDNKTGEKGDNKIGEKDDNKINEKD) shows a compositional bias: basic and acidic residues. 2 LRR repeats span residues 2063-2086 (ITKV…MFNK) and 2129-2153 (DEEI…NVKD). Positions 2228–2261 (KNKSNKKKRAKKNIKLGEEENESECNNEGECNNE) are disordered. Positions 2230 to 2241 (KSNKKKRAKKNI) are enriched in basic residues. Residues 2246 to 2261 (EENESECNNEGECNNE) show a composition bias toward acidic residues. LRR repeat units follow at residues 2672-2695 (LDKL…KTID), 2773-2796 (NTVL…TVDI), 2864-2888 (INDD…VNNN), and 2904-2929 (ANNI…YNNS). Residues 2956–2975 (MNNTKQRSHSSYHTSFPMQN) are disordered. 6 LRR repeats span residues 3377–3400 (QNNM…NITM), 3438–3461 (NNSM…YNNS), 3756–3781 (SQRL…NINN), 3935–3960 (QPNI…NINN), 3965–3985 (QPNI…SMNQ), and 3986–4010 (PNIN…NINN). A coiled-coil region spans residues 4203–4272 (DMNQQERLQQ…ERLQQKWEQQ (70 aa)). LRR repeat units follow at residues 4296 to 4321 (YQEL…IFLK) and 4333 to 4357 (QKMH…SLQQ). The interval 4384 to 4412 (QMNHQQINKHQMNQQQMNKQQMNQQQINQ) is disordered.

The protein resides in the membrane. This is Protein PF3D7_1417600 from Plasmodium falciparum (isolate 3D7).